The chain runs to 316 residues: Small kinetochore-associated protein (316 aa).

Ser-128 carries the post-translational modification Phosphoserine. The interval 159 to 316 is interaction with SPAG5; it reads VRKGYKPLSK…LKEMEQLLEM (158 aa). 2 coiled-coil regions span residues 166-216 and 248-316; these read LSKQ…FRDN and SMLL…LLEM.

As to quaternary structure, part of an astrin (SPAG5)-kinastrin (SKAP) complex containing KNSTRN, SPAG5, PLK1, DYNLL1 and SGO2. Interacts with SPAG5. Directly binds to microtubules, although at relatively low affinity. Interacts with CENPE; this interaction greatly favors microtubule-binding. Interacts with DSN1/MIS13; leading to localization to kinetochores. Interacts with MAPRE1/EB1; leading to localization to the microtubule plus ends. Interacts with PRPF19. Interacts with DYNLL1. Interacts with MAP4. Widely expressed, including in skin.

The protein resides in the nucleus. Its subcellular location is the chromosome. The protein localises to the centromere. It localises to the kinetochore. It is found in the cytoplasm. The protein resides in the cytoskeleton. Its subcellular location is the spindle pole. The protein localises to the microtubule organizing center. Functionally, essential component of the mitotic spindle required for faithful chromosome segregation and progression into anaphase. Promotes the metaphase-to-anaphase transition and is required for chromosome alignment, normal timing of sister chromatid segregation, and maintenance of spindle pole architecture. The astrin (SPAG5)-kinastrin (SKAP) complex promotes stable microtubule-kinetochore attachments. Required for kinetochore oscillations and dynamics of microtubule plus-ends during live cell mitosis, possibly by forming a link between spindle microtubule plus-ends and mitotic chromosomes to achieve faithful cell division. May be involved in UV-induced apoptosis via its interaction with PRPF19; however, these results need additional evidences. The sequence is that of Small kinetochore-associated protein from Homo sapiens (Human).